Here is a 378-residue protein sequence, read N- to C-terminus: Metacaspase-1B (378 aa).

Residues 1 to 70 are disordered; it reads MCSPPPYPPQ…QEAQSFGGGA (70 aa). Positions 10–29 are enriched in low complexity; sequence QGHHYPPSPHGSYYSPTPYG. Catalysis depends on residues H169 and C225.

This sequence belongs to the peptidase C14B family.

Its function is as follows. Involved in cell death (apoptosis). This chain is Metacaspase-1B (casB), found in Aspergillus terreus (strain NIH 2624 / FGSC A1156).